Reading from the N-terminus, the 555-residue chain is E3 ubiquitin-protein ligase NEURL1B (555 aa).

The 157-residue stretch at 38 to 194 folds into the NHR 1 domain; that stretch reads APRFHAQAKG…ITDEVQLLES (157 aa). T199 bears the Phosphothreonine mark. An NHR 2 domain is found at 279–433; sequence DLRFHATRGP…GVAGQLRLLG (155 aa). Residues 436–493 are disordered; the sequence is QSSPATTTPSGSLSGSQDDSDSDMTFSVNQSSSASESSLVTAPSSPLSPPVSPVFSPP. Low complexity predominate over residues 462 to 480; it reads SVNQSSSASESSLVTAPSS. Over residues 481 to 493 the composition is skewed to pro residues; sequence PLSPPVSPVFSPP. Residues 503–543 form an RING-type zinc finger; that stretch reads CTVCFDGEVDTVIYTCGHMCLCHSCGLRLKRQARACCPICR.

In terms of assembly, interacts with JAG1, DLL1 and DLL4. Highest expression in brain, prostate and small intestine. In the brain the levels are higher in fetal than in adult stage. In the adult brain the highest levels are detected in the olfactory system, cerebellar cortex, optic nerve and the frontal lobe.

The protein resides in the cytoplasm. The enzyme catalyses S-ubiquitinyl-[E2 ubiquitin-conjugating enzyme]-L-cysteine + [acceptor protein]-L-lysine = [E2 ubiquitin-conjugating enzyme]-L-cysteine + N(6)-ubiquitinyl-[acceptor protein]-L-lysine.. The protein operates within protein modification; protein ubiquitination. E3 ubiquitin-protein ligase involved in regulation of the Notch pathway through influencing the stability and activity of several Notch ligands. This Homo sapiens (Human) protein is E3 ubiquitin-protein ligase NEURL1B (NEURL1B).